Here is a 79-residue protein sequence, read N- to C-terminus: Small ribosomal subunit protein bS18 (79 aa).

This sequence belongs to the bacterial ribosomal protein bS18 family. Part of the 30S ribosomal subunit. Forms a tight heterodimer with protein bS6.

Its function is as follows. Binds as a heterodimer with protein bS6 to the central domain of the 16S rRNA, where it helps stabilize the platform of the 30S subunit. The sequence is that of Small ribosomal subunit protein bS18 from Streptococcus pyogenes serotype M49 (strain NZ131).